We begin with the raw amino-acid sequence, 389 residues long: Large envelope protein (389 aa).

An N-acetylmethionine modification is found at M1. G2 carries the N-myristoyl glycine; by host lipid modification. The pre-S1 stretch occupies residues G2–A108. A pre-S region spans residues G2–N163. At G2 to G170 the chain is on the virion surface; in external conformation side. At G2–R242 the chain is on the intravirion; in internal conformation side. Residues I73–P99 are disordered. Positions M109–N163 are pre-S2. Residues F171–I191 traverse the membrane as a helical segment. Residues P192–R242 lie on the Intravirion; in external conformation side of the membrane. A helical transmembrane segment spans residues F243–Y263. Residues Q264–S337 are Virion surface-facing. The N-linked (GlcNAc...) asparagine; by host glycan is linked to N309. A helical transmembrane segment spans residues L338–I358. Residues W359–W364 lie on the Intravirion side of the membrane. The helical transmembrane segment at G365–V387 threads the bilayer. Over Y388–I389 the chain is Virion surface.

It belongs to the orthohepadnavirus major surface antigen family. As to quaternary structure, in its internal form (Li-HBsAg), interacts with the capsid protein and with the isoform S. Interacts with host chaperone CANX. Associates with host chaperone CANX through its pre-S2 N glycan; this association may be essential for isoform M proper secretion. In terms of assembly, interacts with isoform L. Interacts with the antigens of satellite virus HDV (HDVAgs); this interaction is required for encapsidation of HDV genomic RNA. Isoform M is N-terminally acetylated by host at a ratio of 90%, and N-glycosylated by host at the pre-S2 region. Post-translationally, myristoylated.

The protein resides in the virion membrane. In terms of biological role, the large envelope protein exists in two topological conformations, one which is termed 'external' or Le-HBsAg and the other 'internal' or Li-HBsAg. In its external conformation the protein attaches the virus to cell receptors and thereby initiating infection. This interaction determines the species specificity and liver tropism. This attachment induces virion internalization predominantly through caveolin-mediated endocytosis. The large envelope protein also assures fusion between virion membrane and endosomal membrane. In its internal conformation the protein plays a role in virion morphogenesis and mediates the contact with the nucleocapsid like a matrix protein. Functionally, the middle envelope protein plays an important role in the budding of the virion. It is involved in the induction of budding in a nucleocapsid independent way. In this process the majority of envelope proteins bud to form subviral lipoprotein particles of 22 nm of diameter that do not contain a nucleocapsid. The polypeptide is Large envelope protein (Gorilla gorilla (western gorilla)).